The chain runs to 443 residues: ATP-dependent protease ATPase subunit HslU (443 aa).

ATP is bound by residues I18 and 60–65; that span reads GVGKTE. Residues 139–161 form a disordered region; sequence ARDSGFDANPSEENNATRQKFRK. ATP-binding residues include D256, E321, and R393.

The protein belongs to the ClpX chaperone family. HslU subfamily. A double ring-shaped homohexamer of HslV is capped on each side by a ring-shaped HslU homohexamer. The assembly of the HslU/HslV complex is dependent on binding of ATP.

The protein resides in the cytoplasm. In terms of biological role, ATPase subunit of a proteasome-like degradation complex; this subunit has chaperone activity. The binding of ATP and its subsequent hydrolysis by HslU are essential for unfolding of protein substrates subsequently hydrolyzed by HslV. HslU recognizes the N-terminal part of its protein substrates and unfolds these before they are guided to HslV for hydrolysis. The chain is ATP-dependent protease ATPase subunit HslU from Nitrosomonas eutropha (strain DSM 101675 / C91 / Nm57).